The following is a 246-amino-acid chain: Ribonuclease 3 (246 aa).

Residues 18–147 form the RNase III domain; the sequence is FQELQKKIGI…FIGALYLDQG (130 aa). Residue E60 coordinates Mg(2+). Residue D64 is part of the active site. Positions 133 and 136 each coordinate Mg(2+). The active site involves E136. Residues 173–242 form the DRBM domain; that stretch reads DFKSQLQELV…AQMALETLRA (70 aa).

The protein belongs to the ribonuclease III family. Homodimer. Mg(2+) serves as cofactor.

Its subcellular location is the cytoplasm. It carries out the reaction Endonucleolytic cleavage to 5'-phosphomonoester.. Functionally, digests double-stranded RNA. Involved in the processing of primary rRNA transcript to yield the immediate precursors to the large and small rRNAs (23S and 16S). Processes some mRNAs, and tRNAs when they are encoded in the rRNA operon. Processes pre-crRNA and tracrRNA of type II CRISPR loci if present in the organism. The sequence is that of Ribonuclease 3 from Geobacillus thermodenitrificans (strain NG80-2).